A 976-amino-acid chain; its full sequence is Ephrin type-A receptor 1 (976 aa).

The first 25 residues, 1-25 (MERRWPLGLGLVLLLCAPLPPGARA), serve as a signal peptide directing secretion. At 26-547 (KEVTLMDTSK…PVSRGLTGGE (522 aa)) the chain is on the extracellular side. The region spanning 27–209 (EVTLMDTSKA…FYQRCPETLN (183 aa)) is the Eph LBD domain. Fibronectin type-III domains are found at residues 332 to 445 (PPSA…MGHA) and 447 to 538 (SLSG…TSPP). Asparagine 414 carries N-linked (GlcNAc...) asparagine glycosylation. Residues 548–568 (IVAVIFGLLLGAALLLGILVF) form a helical membrane-spanning segment. Topologically, residues 569–976 (RSRRAQRQRQ…ILCSIQGFKD (408 aa)) are cytoplasmic. A phosphotyrosine; by autocatalysis mark is found at tyrosine 599 and tyrosine 605. In terms of domain architecture, Protein kinase spans 624-884 (LMVDTVIGEG…KLQAHLEQLL (261 aa)). ATP is bound by residues 630–638 (IGEGEFGEV) and lysine 656. Aspartate 749 serves as the catalytic Proton acceptor. A Phosphotyrosine; by autocatalysis modification is found at tyrosine 781. 2 positions are modified to phosphoserine: serine 906 and serine 910. The SAM domain occupies 913-976 (IPYRTVSEWL…ILCSIQGFKD (64 aa)). Tyrosine 930 carries the post-translational modification Phosphotyrosine; by autocatalysis. Positions 974–976 (FKD) match the PDZ-binding motif.

The protein belongs to the protein kinase superfamily. Tyr protein kinase family. Ephrin receptor subfamily. As to quaternary structure, homodimer. Forms a signaling complex with LCK; PTK2B/PYK2 and PI3-kinase upon activation by EFNA1; regulates T-lymphocytes migration. Interacts (via SAM domain) with ILK (via ANK repeats); stimulated by EFNA1 but independent of the kinase activity of EPHA1. Interacts (kinase activity-dependent) with PTK2/FAK1. In terms of processing, phosphorylated. Autophosphorylation is stimulated by its ligand EFNA1. Ubiquitinated. Overexpressed in several carcinomas.

It localises to the cell membrane. The enzyme catalyses L-tyrosyl-[protein] + ATP = O-phospho-L-tyrosyl-[protein] + ADP + H(+). In terms of biological role, receptor tyrosine kinase which binds promiscuously membrane-bound ephrin-A family ligands residing on adjacent cells, leading to contact-dependent bidirectional signaling into neighboring cells. The signaling pathway downstream of the receptor is referred to as forward signaling while the signaling pathway downstream of the ephrin ligand is referred to as reverse signaling. Binds with a low affinity EFNA3 and EFNA4 and with a high affinity to EFNA1 which most probably constitutes its cognate/functional ligand. Upon activation by EFNA1 induces cell attachment to the extracellular matrix inhibiting cell spreading and motility through regulation of ILK and downstream RHOA and RAC. Also plays a role in angiogenesis and regulates cell proliferation. May play a role in apoptosis. In Homo sapiens (Human), this protein is Ephrin type-A receptor 1 (EPHA1).